The primary structure comprises 323 residues: Thioredoxin reductase (323 aa).

42–49 is a binding site for FAD; it reads YRAEADGA. A disulfide bridge connects residues cysteine 143 and cysteine 146. 286–295 provides a ligand contact to FAD; it reads DVLCNEVKQA.

It belongs to the class-II pyridine nucleotide-disulfide oxidoreductase family. As to quaternary structure, homodimer. The cofactor is FAD.

It localises to the cytoplasm. It carries out the reaction [thioredoxin]-dithiol + NADP(+) = [thioredoxin]-disulfide + NADPH + H(+). This Aquifex aeolicus (strain VF5) protein is Thioredoxin reductase (trxB).